The sequence spans 408 residues: MGINEIIMYIMMFFMLIAAVDRILSQFGGSARFLGKFGKSIEGSGGQFEEGFMAMGALGLAMVGMTALAPVLAHVLGPVIIPVYEMLGANPSMFAGTLLACDMGGFFLAKELAGGDVAAWLYSGLILGSMMGPTIVFSIPVALGIIEPSDRRYLALGVLAGIVTIPIGCIAGGLIAMYSGVQINGQPVEFTFALILMNMIPVLIVAVLVALGLKFIPEKMINGFQIFAKFLVALITIGLAAAVVKFLLGWELIPGLDPIFMAPGDKPGEVMRAIEVIGSISCVLLGAYPMVLLLTRWFEKPLMNVGKLLNVNNIAAAGMVATLANNIPMFGMMKQMDTRGKVINCAFAVSAAFALGDHLGFAAANMNAMIFPMIVGKLIGGVTAIGVAMMLVPKDDAAQVKTEAEAQS.

11 helical membrane passes run 1–21 (MGIN…AAVD), 61–81 (AMVG…PVII), 89–109 (ANPS…FFLA), 126–146 (ILGS…LGII), 155–175 (ALGV…GGLI), 192–212 (FALI…VALG), 230–250 (FLVA…LLGW), 274–294 (IEVI…VLLL), 313–333 (NIAA…FGMM), 342–362 (VINC…LGFA), and 369–389 (MIFP…GVAM).

This sequence belongs to the EutH family.

The protein resides in the cell inner membrane. It carries out the reaction ethanolamine(in) = ethanolamine(out). It participates in amine and polyamine degradation; ethanolamine degradation. Functionally, probably involved in the diffusion of protonated ethanolamine (EA) into the cell at low pH. At low pH most EA is protonated, and this permease becomes necessary. Contributes to bacterial survival and replication in acidified macrophage vacuoles, but not to bacterial uptake by macrophages. Its function is as follows. Expression of the eut operon allows this bacteria to use ethanolamine (EA) as a carbon, nitrogen and energy source. It relies on cobalamin (vitamin B12) both as a cofactor for the ethanolamine ammonia-lyase (EAL) activity and to induce the operon. EA enhances bacterial survival in macrophages in a concentration-dependent manner, suggesting it is an important nutrient during infection. The sequence is that of Probable ethanolamine permease EutH from Salmonella typhimurium (strain LT2 / SGSC1412 / ATCC 700720).